The sequence spans 407 residues: Extracellular superoxide dismutase [Cu-Zn] 3 (407 aa).

Residues 1 to 19 (MRLLSVLVFLISVISIAKA) form the signal peptide. The Extracellular segment spans residues 20–386 (DYQYAFCKFN…SESYNDNEPG (367 aa)). N-linked (GlcNAc...) asparagine glycans are attached at residues N51, N205, and N224. Cu cation-binding residues include H245 and H247. An N-linked (GlcNAc...) asparagine glycan is attached at N256. H263 provides a ligand contact to Cu cation. H263, H271, H280, and D283 together coordinate Zn(2+). H320 lines the Cu cation pocket. 2 N-linked (GlcNAc...) asparagine glycosylation sites follow: N321 and N364. Residues 387-406 (SSSTVIPFFALIIFSIIFAL) form a helical membrane-spanning segment. Position 407 (L407) is a topological domain, cytoplasmic.

This sequence belongs to the Cu-Zn superoxide dismutase family. It depends on Cu cation as a cofactor. Zn(2+) serves as cofactor.

It is found in the cell membrane. It carries out the reaction 2 superoxide + 2 H(+) = H2O2 + O2. Protect the extracellular space from toxic effect of reactive oxygen intermediates by converting superoxyde radicals into hydrogen peroxyde and oxygen. This Dictyostelium discoideum (Social amoeba) protein is Extracellular superoxide dismutase [Cu-Zn] 3 (sodC).